Consider the following 226-residue polypeptide: Lipoprotein-releasing system ATP-binding protein LolD (226 aa).

An ABC transporter domain is found at 5–225; it reads LELVEIERHF…TLKEKKIVEL (221 aa). 41 to 48 contacts ATP; sequence APSGAGKS.

Belongs to the ABC transporter superfamily. Lipoprotein translocase (TC 3.A.1.125) family. The complex is composed of two ATP-binding proteins (LolD) and two transmembrane proteins (LolC and LolE).

It is found in the cell inner membrane. In terms of biological role, part of the ABC transporter complex LolCDE involved in the translocation of mature outer membrane-directed lipoproteins, from the inner membrane to the periplasmic chaperone, LolA. Responsible for the formation of the LolA-lipoprotein complex in an ATP-dependent manner. This chain is Lipoprotein-releasing system ATP-binding protein LolD, found in Bartonella quintana (strain Toulouse) (Rochalimaea quintana).